Reading from the N-terminus, the 712-residue chain is Lactoperoxidase (712 aa).

The N-terminal stretch at Met1–Ala21 is a signal peptide. A propeptide spanning residues Ser22–Leu117 is cleaved from the precursor. N-linked (GlcNAc...) (complex) asparagine; alternate glycosylation is present at Asn106. N-linked (GlcNAc...) (hybrid) asparagine; alternate glycosylation is present at Asn106. 4 disulfide bridges follow: Cys123–Cys284, Cys132–Cys145, Cys246–Cys256, and Cys250–Cys274. The N-linked (GlcNAc...) (complex) asparagine; alternate glycan is linked to Asn212. Asn212 carries N-linked (GlcNAc...) (hybrid) asparagine; alternate glycosylation. Residue Asp225 participates in heme b binding. The Proton acceptor role is filled by His226. Ca(2+) is bound at residue Asp227. Ca(2+) is bound by residues Thr301, Phe303, Asp305, and Ser307. A Phosphoserine modification is found at Ser315. The N-linked (GlcNAc...) (high mannose) asparagine glycan is linked to Asn322. A disulfide bond links Cys354 and Cys365. Asn358 carries N-linked (GlcNAc...) asparagine glycosylation. Residue Glu375 coordinates heme b. N-linked (GlcNAc...) (complex) asparagine; alternate glycosylation is present at Asn449. A glycan (N-linked (GlcNAc...) (hybrid) asparagine; alternate) is linked at Asn449. Asn449 carries N-linked (GlcNAc...) (high mannose) asparagine; alternate glycosylation. His468 is a heme b binding site. Tyr482 carries the post-translational modification 3'-nitrotyrosine. 2 disulfide bridges follow: Cys573–Cys630 and Cys671–Cys696.

This sequence belongs to the peroxidase family. XPO subfamily. It depends on Ca(2+) as a cofactor. The cofactor is heme b. As to expression, mammary gland; milk.

Its subcellular location is the secreted. The protein resides in the cytoplasm. The enzyme catalyses 2 a phenolic donor + H2O2 = 2 a phenolic radical donor + 2 H2O. It carries out the reaction thiocyanate + H2O2 + H(+) = hypothiocyanous acid + H2O. The catalysed reaction is iodide + H2O2 = hypoiodite + H2O. Its activity is regulated as follows. Inhibited by small molecule methimazole (MMZ). In terms of biological role, heme-containing oxidoreductase which catalyzes the conversion of thiocyanate (SCN(-)) into antimicrobial agent hypothiocyanous acid (OSCN(-)) in the presence of hydrogen peroxide (H2O2). Also involved in the conversion of iodide (I(-)) into hypoiodite (IO(-)) in the presence of H2O2. Responsible for the inactivation of a wide range of micro-organisms and hence, important component of defense mechanism. Shows antibacterial properties against several Gram-positive bacteria including some Staphylococcus species and Gram-negative bacteria including E.coli, P.aeruginosa and some Salmonella species. Inhibits the growth of several fungi including A.niger, Trichoderma species, C.cassicola, P.meadii and C.salmonicolor. Does not have anti-fungal activity towards C.albicans and Pythium species. May protect the udder from infection and may promote growth in newborns. May be implicated in airway host defense against infection. May contribute to maintaining an appropriate H2O2 cellular level, therefore protecting cells from H2O2-caused injuries and inflammation. This is Lactoperoxidase (LPO) from Capra hircus (Goat).